The chain runs to 189 residues: Chitin synthase 2 (189 aa).

Belongs to the chitin synthase family. Class II subfamily.

The protein localises to the cell membrane. The enzyme catalyses [(1-&gt;4)-N-acetyl-beta-D-glucosaminyl](n) + UDP-N-acetyl-alpha-D-glucosamine = [(1-&gt;4)-N-acetyl-beta-D-glucosaminyl](n+1) + UDP + H(+). In terms of biological role, polymerizes chitin, a structural polymer of the cell wall and septum, by transferring the sugar moiety of UDP-GlcNAc to the non-reducing end of the growing chitin polymer. The protein is Chitin synthase 2 (CHS2) of Exophiala exophialae (Black yeast-like fungus).